The primary structure comprises 364 residues: Dihydroorotate dehydrogenase (quinone) (364 aa).

Residues 61–65 (AGFDK) and threonine 85 each bind FMN. Position 65 (lysine 65) interacts with substrate. A substrate-binding site is contributed by 110 to 114 (NRMGF). Residues asparagine 139 and asparagine 170 each contribute to the FMN site. Asparagine 170 serves as a coordination point for substrate. Serine 173 (nucleophile) is an active-site residue. Residue asparagine 175 participates in substrate binding. The FMN site is built by lysine 214 and alanine 242. 243-244 (NT) serves as a coordination point for substrate. FMN contacts are provided by residues glycine 266, glycine 295, and 316 to 317 (YS).

It belongs to the dihydroorotate dehydrogenase family. Type 2 subfamily. In terms of assembly, monomer. FMN is required as a cofactor.

It localises to the cell membrane. It carries out the reaction (S)-dihydroorotate + a quinone = orotate + a quinol. It functions in the pathway pyrimidine metabolism; UMP biosynthesis via de novo pathway; orotate from (S)-dihydroorotate (quinone route): step 1/1. Its function is as follows. Catalyzes the conversion of dihydroorotate to orotate with quinone as electron acceptor. The protein is Dihydroorotate dehydrogenase (quinone) of Rhodopseudomonas palustris (strain BisA53).